The sequence spans 665 residues: MSEQSCQMSELRLLLLGKCRSGKSATGNAILGKHVFKSKFSDQTVIKMCQRESWVLRERKVVVIDTPDLFSSIACAEDKQRNIQHCLELSAPSLHALLLVIAIGHFTREDEETAKGIQQVFGAEARRHIIIVFTRKDDLGDDLLQDFIEKNKPLKQLVQDYEGRYCIFNNKTNSKDEQITQVLELLRKVESLVNTNGGPYHVNFKTEGSRFQDCVNEAASQEGDKPQGPRERQLQSTGPEQNPGTSELTVLLVGKRGAGKSAAGNSILGRQAFQTGFSEQSVTQSFLSESRSWRKKKVSIIDAPDISSLKNIDSEVRKHICTGPHAFLLVTPLGFYTKNDEAVLSTIQNNFGEKFFEYMIILLTRKEDLGDQDLDTFLRNSNKALYGLIQKCKNRYSAFNYRATGEEEQRQADELLEKIESMVHQNGNKHCVFREKETLNIVLVGRSGTGKSATGNSILGSLVFTSRLRAQPVTKTSQSGRRTWDGQEVVVVDTPSFNQMLDVEKDPSRLEEEVKRCLSCCEKGDTFFVLVFQLGRFTEEDKTAVAKLEAIFGADFTKYAIMLFTRKEDLGAGNLEDFMKNSDNKALRRIFKKCGRRVCAFNNKETGQAQETQVKALLTKVNDLRKESGWSGYPHTQENVSKLIKNVQEMSQAEKLLKNLIGILQ.

The AIG1-type G 1 domain occupies 8–210 (MSELRLLLLG…HVNFKTEGSR (203 aa)). The tract at residues 17–24 (GKCRSGKS) is G1. GTP contacts are provided by residues 17–25 (GKCRSGKSA) and S38. Residues 44–48 (TVIKM) form a G2 region. Residues 65 to 68 (DTPD) are G3. Residues 134–137 (TRKD) form a G4 region. GTP contacts are provided by residues 135–137 (RKD) and N170. The tract at residues 169-171 (NNK) is G5. Residues 217 to 246 (EAASQEGDKPQGPRERQLQSTGPEQNPGTS) are disordered. A compositionally biased stretch (basic and acidic residues) spans 222-233 (EGDKPQGPRERQ). Over residues 234 to 246 (LQSTGPEQNPGTS) the composition is skewed to polar residues. AIG1-type G domains follow at residues 245 to 435 (TSEL…VFRE) and 436 to 644 (KETL…SKLI). Coiled coils occupy residues 400 to 427 (NYRATGEEEQRQADELLEKIESMVHQNG) and 608 to 657 (QAQE…EKLL).

The protein belongs to the TRAFAC class TrmE-Era-EngA-EngB-Septin-like GTPase superfamily. AIG1/Toc34/Toc159-like paraseptin GTPase family. IAN subfamily. In terms of tissue distribution, expressed in the spleen, intestine, liver, and colon, as well as in lung, placenta, kidney, muscle, and heart. Extremely low expression, if any, in brain, in thymus, bone marrow, and blood leukocytes. Detected in T-cells.

Its subcellular location is the endoplasmic reticulum. It is found in the golgi apparatus. It localises to the mitochondrion. The protein resides in the cytoplasm. The protein localises to the cytosol. Exerts an anti-apoptotic effect in the immune system and is involved in responses to infections. This Homo sapiens (Human) protein is GTPase IMAP family member 8 (GIMAP8).